The sequence spans 309 residues: Ribonuclease Z (309 aa).

Residues His-63, His-65, Asp-67, His-68, His-141, Asp-212, and His-270 each contribute to the Zn(2+) site. Asp-67 (proton acceptor) is an active-site residue.

This sequence belongs to the RNase Z family. In terms of assembly, homodimer. Zn(2+) serves as cofactor.

It catalyses the reaction Endonucleolytic cleavage of RNA, removing extra 3' nucleotides from tRNA precursor, generating 3' termini of tRNAs. A 3'-hydroxy group is left at the tRNA terminus and a 5'-phosphoryl group is left at the trailer molecule.. In terms of biological role, zinc phosphodiesterase, which displays some tRNA 3'-processing endonuclease activity. Probably involved in tRNA maturation, by removing a 3'-trailer from precursor tRNA. The protein is Ribonuclease Z of Lactobacillus delbrueckii subsp. bulgaricus (strain ATCC 11842 / DSM 20081 / BCRC 10696 / JCM 1002 / NBRC 13953 / NCIMB 11778 / NCTC 12712 / WDCM 00102 / Lb 14).